The primary structure comprises 319 residues: MVLGSAALFVLSLCVTELTLHAADTCPEVKVLDLEGSNKLTILQGCPGLPGALGPKGEAGAKGDRGESGLPGHPGKAGPTGPKGDRGEKGVRGEKGDTGPSQSCATGPRTCKELLTRGYFLTGWYTIYLPDCRPLTVLCDMDTDGGGWTVFQRRIDGTVDFFRDWTSYKQGFGSQLGEFWLGNDNIHALTTQGTNELRVDLADFDGNHDFAKYSSFQIQGEAEKYKLILGNFLGGGAGDSLTSQNNMLFSTKDQDNDQGSSNCAVRYHGAWWYSDCHTSNLNGLYLRGLHKSYANGVNWKSWKGYNYSYKVSEMKVRLI.

Positions Met1 to Ala22 are cleaved as a signal peptide. Residues Gly45–Ser101 enclose the Collagen-like domain. A disordered region spans residues Leu53–Thr106. A compositionally biased stretch (basic and acidic residues) spans Lys83–Asp97. Residues Gln102–Ile319 enclose the Fibrinogen C-terminal domain. 2 cysteine pairs are disulfide-bonded: Cys104-Cys132 and Cys111-Cys139. Residues Asp255, Asp257, and Ser261 each contribute to the Ca(2+) site. Residues Cys263 and Cys276 are joined by a disulfide bond. Asn306 is a glycosylation site (N-linked (GlcNAc...) asparagine).

The protein belongs to the ficolin lectin family. In terms of assembly, homotrimer. Interacts with elastin. Interacts with MASP1 and MASP2.

The protein localises to the secreted. May function in innate immunity through activation of the lectin complement pathway. Calcium-dependent and GlcNAc-binding lectin. The sequence is that of Ficolin-2 (Fcn2) from Rattus norvegicus (Rat).